The primary structure comprises 281 residues: Small ribosomal subunit biogenesis GTPase RsgA (281 aa).

One can recognise a CP-type G domain in the interval 59-212 (QNEFIRPKVA…LIDTPGFSSL (154 aa)). Residues 108-111 (TKAD) and 155-163 (GQSGVGKTT) contribute to the GTP site. Positions 235, 240, 242, and 250 each coordinate Zn(2+).

Belongs to the TRAFAC class YlqF/YawG GTPase family. RsgA subfamily. As to quaternary structure, monomer. Associates with 30S ribosomal subunit, binds 16S rRNA. Zn(2+) is required as a cofactor.

The protein localises to the cytoplasm. One of several proteins that assist in the late maturation steps of the functional core of the 30S ribosomal subunit. Helps release RbfA from mature subunits. May play a role in the assembly of ribosomal proteins into the subunit. Circularly permuted GTPase that catalyzes slow GTP hydrolysis, GTPase activity is stimulated by the 30S ribosomal subunit. In Mycoplasmopsis agalactiae (strain NCTC 10123 / CIP 59.7 / PG2) (Mycoplasma agalactiae), this protein is Small ribosomal subunit biogenesis GTPase RsgA.